Reading from the N-terminus, the 96-residue chain is Large ribosomal subunit protein bL28 (96 aa).

The protein belongs to the bacterial ribosomal protein bL28 family.

In Methylobacterium sp. (strain 4-46), this protein is Large ribosomal subunit protein bL28.